A 488-amino-acid chain; its full sequence is Proline--tRNA ligase (488 aa).

It belongs to the class-II aminoacyl-tRNA synthetase family. ProS type 3 subfamily. In terms of assembly, homodimer.

It is found in the cytoplasm. It carries out the reaction tRNA(Pro) + L-proline + ATP = L-prolyl-tRNA(Pro) + AMP + diphosphate. Functionally, catalyzes the attachment of proline to tRNA(Pro) in a two-step reaction: proline is first activated by ATP to form Pro-AMP and then transferred to the acceptor end of tRNA(Pro). The chain is Proline--tRNA ligase from Pyrobaculum aerophilum (strain ATCC 51768 / DSM 7523 / JCM 9630 / CIP 104966 / NBRC 100827 / IM2).